The sequence spans 543 residues: MTKYVFVTGGVVSSIGKGIVAASLGRLLKSRQYSVSILKLDPYINVDPGTMSPFQHGEVFVTDDGAETDLDLGHYERFTDTPMSRLNSVTTGSIYQAVINKERRGDYMGGTVQVIPHITNEIKERILRVAKDKNPDVVIIEIGGTVGDIESLPFLEAIRQFRTEVGRHHVLFMHVTLVPWIPSAGEMKTKPTQHSVKELRSIGIQPDILICRCDRPLVPGIKEKLSQFCDVPVECVIPSPDAKSIYEVPLLLEREGLATQVLNLLNLEQRQPDLSQWQALVERLYGSHRPLEVAIVGKYVRLSDAYLSVVEALRHSAIALDQELRIRWVNSEELVENGVETALSNVGAIVVPGGFGIRGVEGKIAAIQYAREQGIPFLGLCLGMQCAVIEWARHIAGLENANSAEFDANTPHPVIHLLPEQQDIVDLGGTMRLGLYACRLAPHSLAEKLYGETVIYERHRHRYEFNNAYRNLFLETGYQITGTSPDGRLVEIIEYPAHPFFIAVQFHPEFRSRPNAPHPLFYGLLAAAAKNSNRDHPQLVPSF.

Residues 1–267 (MTKYVFVTGG…ATQVLNLLNL (267 aa)) form an amidoligase domain region. Ser-13 contacts CTP. Ser-13 is a UTP binding site. Residues 14 to 19 (SIGKGI) and Asp-71 each bind ATP. Mg(2+) is bound by residues Asp-71 and Glu-141. CTP-binding positions include 148–150 (DIE), 188–193 (KTKPTQ), and Lys-224. Residues 188-193 (KTKPTQ) and Lys-224 each bind UTP. A Glutamine amidotransferase type-1 domain is found at 292 to 534 (EVAIVGKYVR…LAAAAKNSNR (243 aa)). Gly-354 contacts L-glutamine. Catalysis depends on Cys-381, which acts as the Nucleophile; for glutamine hydrolysis. Residues 382-385 (LGMQ), Glu-405, and Arg-462 contribute to the L-glutamine site. Residues His-507 and Glu-509 contribute to the active site.

This sequence belongs to the CTP synthase family. In terms of assembly, homotetramer.

The catalysed reaction is UTP + L-glutamine + ATP + H2O = CTP + L-glutamate + ADP + phosphate + 2 H(+). It carries out the reaction L-glutamine + H2O = L-glutamate + NH4(+). It catalyses the reaction UTP + NH4(+) + ATP = CTP + ADP + phosphate + 2 H(+). It functions in the pathway pyrimidine metabolism; CTP biosynthesis via de novo pathway; CTP from UDP: step 2/2. With respect to regulation, allosterically activated by GTP, when glutamine is the substrate; GTP has no effect on the reaction when ammonia is the substrate. The allosteric effector GTP functions by stabilizing the protein conformation that binds the tetrahedral intermediate(s) formed during glutamine hydrolysis. Inhibited by the product CTP, via allosteric rather than competitive inhibition. Functionally, catalyzes the ATP-dependent amination of UTP to CTP with either L-glutamine or ammonia as the source of nitrogen. Regulates intracellular CTP levels through interactions with the four ribonucleotide triphosphates. The protein is CTP synthase of Thermosynechococcus vestitus (strain NIES-2133 / IAM M-273 / BP-1).